The primary structure comprises 316 residues: MTQGKLSVANKAPGTEGQQQVHGEKKEAPAVPSAPPSYEEATSGEGMKAGAFPPAPTAVPLHPSWAYVDPSSSSSYDNGFPTGDHELFTTFSWDDQKVRRVFVRKVYTILLIQLLVTLAVVALFTFCDPVKDYVQANPGWYWASYAVFFATYLTLACCSGPRRHFPWNLILLTVFTLSMAYLTGMLSSYYNTTSVLLCLGITALVCLSVTVFSFQTKFDFTSCQGVLFVLPMTLFFSGLILAILLPFQYVPWLHAVYAALGAGVFTLFLALDTQLLMGNRRHSLSPEEYIFGALNIYLDIIYIFTFFLQLFGTNRE.

Residues 1 to 53 form a disordered region; sequence MTQGKLSVANKAPGTEGQQQVHGEKKEAPAVPSAPPSYEEATSGEGMKAGAFP. Helical transmembrane passes span 106-126, 138-158, and 165-185; these read VYTI…LFTF, PGWY…LACC, and FPWN…LTGM. Asn191 is a glycosylation site (N-linked (GlcNAc...) asparagine). Helical transmembrane passes span 194–214, 225–245, 250–270, and 290–310; these read SVLL…VFSF, GVLF…AILL, VPWL…LFLA, and IFGA…FLQL.

It belongs to the BI1 family. LFG subfamily. Interacts with FAS/TNFRSF6 and BAX.

The protein resides in the cell membrane. The protein localises to the membrane raft. It localises to the postsynaptic cell membrane. In terms of biological role, antiapoptotic protein which protects cells uniquely from Fas-induced apoptosis. Regulates Fas-mediated apoptosis in neurons by interfering with caspase-8 activation. Plays a role in cerebellar development by affecting cerebellar size, internal granular layer (IGL) thickness, and Purkinje cell (PC) development. In Pongo abelii (Sumatran orangutan), this protein is Protein lifeguard 2 (FAIM2).